A 180-amino-acid chain; its full sequence is Transcription factor IBH1-like 1 (180 aa).

The region spanning 110–160 (KSKSASEEAAAKAKRLVKRRTQGLRNVVPGGELMSNDVLLLQETLDYIVSL) is the bHLH domain.

Belongs to the bHLH protein family.

It localises to the nucleus. In terms of biological role, functions redundandly with IBH1/BHLH158 in a regulation node known as the incoherent feed-forward loop (FFL). Acts as transcriptional repressor that negatively regulates cell and organ elongation in response to gibberellin (GA) and brassinosteroid (BR) signaling. This is Transcription factor IBH1-like 1 from Arabidopsis thaliana (Mouse-ear cress).